The chain runs to 236 residues: Purine nucleoside phosphorylase DeoD-type (236 aa).

His-5 contacts a purine D-ribonucleoside. Residues Gly-21, Arg-25, Arg-44, and Arg-88–Thr-91 contribute to the phosphate site. A purine D-ribonucleoside is bound by residues Glu-180–Glu-182 and Ser-204–Asp-205. The active-site Proton donor is Asp-205.

Belongs to the PNP/UDP phosphorylase family. As to quaternary structure, homohexamer; trimer of homodimers.

The catalysed reaction is a purine D-ribonucleoside + phosphate = a purine nucleobase + alpha-D-ribose 1-phosphate. The enzyme catalyses a purine 2'-deoxy-D-ribonucleoside + phosphate = a purine nucleobase + 2-deoxy-alpha-D-ribose 1-phosphate. Catalyzes the reversible phosphorolytic breakdown of the N-glycosidic bond in the beta-(deoxy)ribonucleoside molecules, with the formation of the corresponding free purine bases and pentose-1-phosphate. The polypeptide is Purine nucleoside phosphorylase DeoD-type (Shewanella baltica (strain OS155 / ATCC BAA-1091)).